A 273-amino-acid polypeptide reads, in one-letter code: 4-hydroxy-tetrahydrodipicolinate reductase (273 aa).

NAD(+)-binding positions include 12-17 and E38; that span reads GAGGRM. R39 is a binding site for NADP(+). NAD(+) is bound by residues 102 to 104 and 126 to 129; these read GTT and AANF. H159 acts as the Proton donor/acceptor in catalysis. H160 contacts (S)-2,3,4,5-tetrahydrodipicolinate. Catalysis depends on K163, which acts as the Proton donor. A (S)-2,3,4,5-tetrahydrodipicolinate-binding site is contributed by 169 to 170; that stretch reads GT.

The protein belongs to the DapB family. Homotetramer.

Its subcellular location is the cytoplasm. It carries out the reaction (S)-2,3,4,5-tetrahydrodipicolinate + NAD(+) + H2O = (2S,4S)-4-hydroxy-2,3,4,5-tetrahydrodipicolinate + NADH + H(+). The enzyme catalyses (S)-2,3,4,5-tetrahydrodipicolinate + NADP(+) + H2O = (2S,4S)-4-hydroxy-2,3,4,5-tetrahydrodipicolinate + NADPH + H(+). It functions in the pathway amino-acid biosynthesis; L-lysine biosynthesis via DAP pathway; (S)-tetrahydrodipicolinate from L-aspartate: step 4/4. Catalyzes the conversion of 4-hydroxy-tetrahydrodipicolinate (HTPA) to tetrahydrodipicolinate. This is 4-hydroxy-tetrahydrodipicolinate reductase from Pectobacterium atrosepticum (strain SCRI 1043 / ATCC BAA-672) (Erwinia carotovora subsp. atroseptica).